A 1083-amino-acid polypeptide reads, in one-letter code: Voltage-gated inwardly rectifying potassium channel KCNH3 (1083 aa).

Residues 1 to 228 (MPAMRGLLAP…HCGALRATWD (228 aa)) are Cytoplasmic-facing. Residues 18–90 (IATRFDGTHS…QQIRKALDEH (73 aa)) form the PAS domain. One can recognise a PAC domain in the interval 93 to 145 (FKAELILYRKSGLPFWCLLDVIPIKNEKGEVALFLVSHKDISETKNRGGPDRW). Over residues 137–150 (KNRGGPDRWKETGG) the composition is skewed to basic and acidic residues. Residues 137-157 (KNRGGPDRWKETGGGRRRYGR) are disordered. A helical transmembrane segment spans residues 229–249 (GFILLATLYVAVTVPYSVCVS). Residues 250-259 (TAREPSAARG) lie on the Extracellular side of the membrane. The helical transmembrane segment at 260 to 280 (PPSVCDLAVEVLFILDIVLNF) threads the bilayer. At 281 to 302 (RTTFVSKSGQVVFAPKSICLHY) the chain is on the cytoplasmic side. Residues 303-323 (VTTWFLLDVIAALPFDLLHAF) traverse the membrane as a helical segment. The Extracellular portion of the chain corresponds to 324–331 (KVNVYFGA). A helical; Voltage-sensor transmembrane segment spans residues 332 to 352 (HLLKTVRLLRLLRLLPRLDRY). Topologically, residues 353–361 (SQYSAVVLT) are cytoplasmic. The helical transmembrane segment at 362–382 (LLMAVFALLAHWVACVWFYIG) threads the bilayer. Topologically, residues 383–453 (QREIESSESE…GGPSLRSAYI (71 aa)) are extracellular. 3 N-linked (GlcNAc...) asparagine glycosylation sites follow: asparagine 421, asparagine 428, and asparagine 436. Residues 454 to 474 (TSLYFALSSLTSVGFGNVSAN) constitute an intramembrane region (pore-forming). Positions 465-470 (SVGFGN) match the Selectivity filter motif. At 475–479 (TDTEK) the chain is on the extracellular side. Residues 480–500 (IFSICTMLIGALMHAVVFGNV) form a helical membrane-spanning segment. At 501–1083 (TAIIQRMYAR…QWTQEEGTGV (583 aa)) the chain is on the cytoplasmic side. A nucleoside 3',5'-cyclic phosphate is bound at residue 582–697 (LFEAASRGCL…FAPRFSRGLR (116 aa)). 3 disordered regions span residues 729-810 (EEKE…LRLP), 832-873 (CGSD…SEAR), and 972-1055 (MAPW…ALPW). Basic residues predominate over residues 773–785 (TAPRPRLGGRGRP). Residues 844–861 (GQSGPECSSSPSPGPESG) are compositionally biased toward low complexity.

It belongs to the potassium channel family. H (Eag) (TC 1.A.1.20) subfamily. Kv12.2/KCNH3 sub-subfamily. As to quaternary structure, the potassium channel is probably composed of a homo- or heterotetrameric complex of pore-forming alpha subunits that can associate with modulating beta subunits. Interacts with KCNE1 and KCNE3; these interactions regulate KCNH3 trafficking to the plasma membrane and its subsequent voltage-gated potassium channel activity. N-glycosylated. N-glycosylation mediates traffick to the cell membrane but is not necessary for voltage-gated potassium channel activity. As to expression, detected only in brain, in particular in the telencephalon. Detected in the cerebral cortex, occipital pole, frontal and temporal lobe, putamen, amygdala, hippocampus and caudate nucleus.

It localises to the cell membrane. It carries out the reaction K(+)(in) = K(+)(out). Its function is as follows. Pore-forming (alpha) subunit of a voltage-gated inwardly rectifying potassium channel. Charactherized by a fast rate of activation during depolarization followed by a rapid inactivation at much more depolarized value causing inward rectification due to a C-type inactivation mechanism. Exhibits a rapid recovery from inactivation. In Homo sapiens (Human), this protein is Voltage-gated inwardly rectifying potassium channel KCNH3.